A 178-amino-acid polypeptide reads, in one-letter code: Cytochrome b6-f complex iron-sulfur subunit (178 aa).

A helical membrane pass occupies residues 20 to 42; it reads LLTFGTATGVALGALYPVANYFM. A Rieske domain is found at 65–161; sequence KTGWLATHQA…VDIEDDAVLV (97 aa). Cysteine 107, histidine 109, cysteine 125, and histidine 128 together coordinate [2Fe-2S] cluster. An intrachain disulfide couples cysteine 112 to cysteine 127.

The protein belongs to the Rieske iron-sulfur protein family. The 4 large subunits of the cytochrome b6-f complex are cytochrome b6, subunit IV (17 kDa polypeptide, PetD), cytochrome f and the Rieske protein, while the 4 small subunits are PetG, PetL, PetM and PetN. The complex functions as a dimer. Requires [2Fe-2S] cluster as cofactor.

The protein resides in the cellular thylakoid membrane. It carries out the reaction 2 oxidized [plastocyanin] + a plastoquinol + 2 H(+)(in) = 2 reduced [plastocyanin] + a plastoquinone + 4 H(+)(out). Component of the cytochrome b6-f complex, which mediates electron transfer between photosystem II (PSII) and photosystem I (PSI), cyclic electron flow around PSI, and state transitions. The polypeptide is Cytochrome b6-f complex iron-sulfur subunit (Prochlorococcus marinus (strain AS9601)).